Reading from the N-terminus, the 159-residue chain is Protein UXT homolog (159 aa).

It belongs to the UXT family.

This chain is Protein UXT homolog, found in Nematostella vectensis (Starlet sea anemone).